The sequence spans 468 residues: Secreted triacylglycerol lipase LIP2 (468 aa).

An N-terminal signal peptide occupies residues 1–22 (MFGFRLFILAAVALAYIQCAAA). Cys-125 and Cys-295 are joined by a disulfide. The active-site Nucleophile is the Ser-209. Asn-242, Asn-252, and Asn-279 each carry an N-linked (GlcNAc...) asparagine glycan. Residues Asp-355 and His-389 contribute to the active site.

It belongs to the AB hydrolase superfamily. Lipase family. Class Lip subfamily.

The protein localises to the secreted. It catalyses the reaction a triacylglycerol + H2O = a diacylglycerol + a fatty acid + H(+). The catalysed reaction is a monoacylglycerol + H2O = glycerol + a fatty acid + H(+). The enzyme catalyses a diacylglycerol + H2O = a monoacylglycerol + a fatty acid + H(+). Secreted lipase that hydrolyzes acylglycerol lipids such as triacylglycerols and consequently releases free fatty acid. Due to an absence of fatty acid synthase genes in Malassezia species, secretory lipases are essential for the yeast to generate free fatty acids from degradation of sebum and assimilate them as lipid sources for growth. Plays important roles not only in lipid metabolism but also in the immune response of host cells and pathogenesis. This chain is Secreted triacylglycerol lipase LIP2, found in Malassezia furfur (Pityriasis versicolor infection agent).